The following is a 338-amino-acid chain: MNVYYDKDCDLSIIQAKKVAIIGYGSQGHAHALNLQDSGVDVTVGLRKDSGSWKKAENAGLKVAEVAQAVQAADVVMILTPDEFQKSLYEDVIEPNIKEGATLAFAHGFAIHYNQVVPRKDLDVIMVAPKAPGHTVRSEFVKGGGIPDLIAIYQDASGQAKQVALSYASGVGGGRSGIIETTFKDETETDLFGEQAVLCGGAVELVKMGFETLTEAGYAPEMAYFECLHELKLIVDLMYEGGIADMNYSISNNAEYGEYVTGPEVINEQSREAMRNALKRIQSGEYAKMFITEGATNYPSMTARRRNNADHEIEKTGAKLRSMMPWIGGNKIIDKEKN.

The KARI N-terminal Rossmann domain maps to 1–181 (MNVYYDKDCD…GGGRSGIIET (181 aa)). NADP(+) is bound by residues 24–27 (YGSQ), R47, S50, S52, and 82–85 (DEFQ). H107 is a catalytic residue. Residue G133 coordinates NADP(+). Residues 182-327 (TFKDETETDL…AKLRSMMPWI (146 aa)) enclose the KARI C-terminal knotted domain. 4 residues coordinate Mg(2+): D190, E194, E226, and E230. A substrate-binding site is contributed by S251.

The protein belongs to the ketol-acid reductoisomerase family. Requires Mg(2+) as cofactor.

The enzyme catalyses (2R)-2,3-dihydroxy-3-methylbutanoate + NADP(+) = (2S)-2-acetolactate + NADPH + H(+). The catalysed reaction is (2R,3R)-2,3-dihydroxy-3-methylpentanoate + NADP(+) = (S)-2-ethyl-2-hydroxy-3-oxobutanoate + NADPH + H(+). The protein operates within amino-acid biosynthesis; L-isoleucine biosynthesis; L-isoleucine from 2-oxobutanoate: step 2/4. Its pathway is amino-acid biosynthesis; L-valine biosynthesis; L-valine from pyruvate: step 2/4. In terms of biological role, involved in the biosynthesis of branched-chain amino acids (BCAA). Catalyzes an alkyl-migration followed by a ketol-acid reduction of (S)-2-acetolactate (S2AL) to yield (R)-2,3-dihydroxy-isovalerate. In the isomerase reaction, S2AL is rearranged via a Mg-dependent methyl migration to produce 3-hydroxy-3-methyl-2-ketobutyrate (HMKB). In the reductase reaction, this 2-ketoacid undergoes a metal-dependent reduction by NADPH to yield (R)-2,3-dihydroxy-isovalerate. The chain is Ketol-acid reductoisomerase (NADP(+)) from Psychrobacter sp. (strain PRwf-1).